The chain runs to 195 residues: dTDP-4-dehydrorhamnose 3,5-epimerase (195 aa).

Residues Arg-31, Glu-36, 54–56, and Arg-67 each bind substrate; that span reads QDN. Residue His-70 is the Proton acceptor of the active site. Substrate-binding residues include Lys-80 and His-127. Residue Tyr-140 is the Proton donor of the active site. 2 residues coordinate substrate: Asp-151 and Lys-176.

This sequence belongs to the dTDP-4-dehydrorhamnose 3,5-epimerase family. In terms of assembly, homodimer.

It carries out the reaction dTDP-4-dehydro-6-deoxy-alpha-D-glucose = dTDP-4-dehydro-beta-L-rhamnose. Its pathway is carbohydrate biosynthesis; dTDP-L-rhamnose biosynthesis. Catalyzes the epimerization of the C3' and C5'positions of dTDP-6-deoxy-D-xylo-4-hexulose, forming dTDP-6-deoxy-L-lyxo-4-hexulose. The sequence is that of dTDP-4-dehydrorhamnose 3,5-epimerase from Sinorhizobium fredii (strain NBRC 101917 / NGR234).